Consider the following 395-residue polypeptide: Acid ceramidase (395 aa).

A signal peptide spans 1-21 (MPGRSCVALVLLAAAVSCAVA). Cysteines 31 and 340 form a disulfide. Catalysis depends on C143, which acts as the Nucleophile. 6 N-linked (GlcNAc...) asparagine glycosylation sites follow: N173, N195, N259, N286, N342, and N348. C388 and C392 are disulfide-bonded.

It belongs to the acid ceramidase family. Heterodimer; disulfide-linked. The heterodimer is composed of the disulfide-linked alpha and beta chains produced by autocatalytic cleavage of the precursor. Isoform 2: May interact with NR5A1 in the nucleus; the direct interaction would negatively regulate NR5A1 transcriptional activity. In terms of processing, N-glycosylated. Post-translationally, proteolytically cleaved into two chains alpha and beta that remain associated via a disulfide bond. Cleavage gives rise to a conformation change that activates the enzyme. The same catalytic Cys residue mediates the autoproteolytic cleavage and subsequent hydrolysis of lipid substrates. The beta chain may undergo an additional C-terminal processing. In terms of tissue distribution, broadly expressed with higher expression in heart.

It localises to the lysosome. The protein localises to the secreted. It is found in the nucleus. Its subcellular location is the cytoplasm. The enzyme catalyses an N-acylsphing-4-enine + H2O = sphing-4-enine + a fatty acid. It catalyses the reaction a beta-D-glucosyl-(1&lt;-&gt;1')-N-acylsphing-4-enine + H2O = beta-D-glucosyl-(1&lt;-&gt;1)-sphing-4-enine + a fatty acid. The catalysed reaction is a globoside Gb3Cer + H2O = a lysoGb3 + a fatty acid. It carries out the reaction a globoside Gb3Cer (d18:1(4E)) + H2O = a lysoGb3(d18:1(4E)) + a fatty acid. The enzyme catalyses N-dodecanoylsphing-4-enine + H2O = dodecanoate + sphing-4-enine. It catalyses the reaction N-tetradecanoylsphing-4-enine + H2O = tetradecanoate + sphing-4-enine. The catalysed reaction is N-hexadecanoylsphing-4-enine + H2O = sphing-4-enine + hexadecanoate. It carries out the reaction N-octadecanoylsphing-4-enine + H2O = sphing-4-enine + octadecanoate. The enzyme catalyses N-dodecanoyl-(4R)-hydroxysphinganine + H2O = (4R)-hydroxysphinganine + dodecanoate. It catalyses the reaction N-(dodecanoyl)-sphinganine + H2O = dodecanoate + sphinganine. The catalysed reaction is N-(acetyl)-sphing-4-enine + H2O = sphing-4-enine + acetate. It carries out the reaction N-(hexanoyl)sphing-4-enine + H2O = hexanoate + sphing-4-enine. The enzyme catalyses N-octanoylsphing-4-enine + H2O = octanoate + sphing-4-enine. It catalyses the reaction N-(9Z-octadecenoyl)-sphing-4-enine + H2O = sphing-4-enine + (9Z)-octadecenoate. The catalysed reaction is N-dodecanoylethanolamine + H2O = dodecanoate + ethanolamine. Its pathway is lipid metabolism; sphingolipid metabolism. Its activity is regulated as follows. Activated by Ca(2+), Mg(2+) and Na(+) cations. Inhibited by Zn(2+). Phosphatidylserine and phosphatidic acid stimulate while cardiolipin, phosphatidylcholine, lysophosphatidylcholine, phosphatidylethanolamine, phosphatidylinositol and sphingomyelin inhibit the reverse ceramide synthase activity. Phosphatidic acid, phosphatidylinositol and C16-ceramide inhibit the ceramidase/hydrolase activity. Lysosomal ceramidase that hydrolyzes sphingolipid ceramides into sphingosine and free fatty acids at acidic pH. Ceramides, sphingosine, and its phosphorylated form sphingosine-1-phosphate are bioactive lipids that mediate cellular signaling pathways regulating several biological processes including cell proliferation, apoptosis and differentiation. Has a higher catalytic efficiency towards C12-ceramides versus other ceramides. Also catalyzes the reverse reaction allowing the synthesis of ceramides from fatty acids and sphingosine. For the reverse synthetic reaction, the natural sphingosine D-erythro isomer is more efficiently utilized as a substrate compared to D-erythro-dihydrosphingosine and D-erythro-phytosphingosine, while the fatty acids with chain lengths of 12 or 14 carbons are the most efficiently used. Also has an N-acylethanolamine hydrolase activity. By regulating the levels of ceramides, sphingosine and sphingosine-1-phosphate in the epidermis, mediates the calcium-induced differentiation of epidermal keratinocytes. Also indirectly regulates tumor necrosis factor/TNF-induced apoptosis. By regulating the intracellular balance between ceramides and sphingosine, in adrenocortical cells, probably also acts as a regulator of steroidogenesis. Its function is as follows. May directly regulate steroidogenesis by binding the nuclear receptor NR5A1 and negatively regulating its transcriptional activity. This Homo sapiens (Human) protein is Acid ceramidase.